Here is a 321-residue protein sequence, read N- to C-terminus: Aspartate carbamoyltransferase catalytic subunit (321 aa).

Carbamoyl phosphate contacts are provided by Arg65 and Thr66. Residue Lys93 coordinates L-aspartate. Carbamoyl phosphate-binding residues include Arg115, His143, and Gln146. L-aspartate-binding residues include Arg176 and Arg230. Residues Gly271 and Pro272 each contribute to the carbamoyl phosphate site.

It belongs to the aspartate/ornithine carbamoyltransferase superfamily. ATCase family. In terms of assembly, heterododecamer (2C3:3R2) of six catalytic PyrB chains organized as two trimers (C3), and six regulatory PyrI chains organized as three dimers (R2).

The enzyme catalyses carbamoyl phosphate + L-aspartate = N-carbamoyl-L-aspartate + phosphate + H(+). The protein operates within pyrimidine metabolism; UMP biosynthesis via de novo pathway; (S)-dihydroorotate from bicarbonate: step 2/3. Catalyzes the condensation of carbamoyl phosphate and aspartate to form carbamoyl aspartate and inorganic phosphate, the committed step in the de novo pyrimidine nucleotide biosynthesis pathway. The protein is Aspartate carbamoyltransferase catalytic subunit of Bartonella henselae (strain ATCC 49882 / DSM 28221 / CCUG 30454 / Houston 1) (Rochalimaea henselae).